Reading from the N-terminus, the 93-residue chain is MQRGAVLLGVVALLVLWPQAGAELYDVNDPDVRAMVIDGQKLMHDCAIANDYIDDPWWTLNLGAFEEKRVYHSMLSELVFCLNAFLQRRQQAP.

The first 22 residues, 1–22 (MQRGAVLLGVVALLVLWPQAGA), serve as a signal peptide directing secretion. The propeptide occupies 23–33 (ELYDVNDPDVR).

The protein belongs to the F superfamily. Contains 4 disulfide bonds. As to expression, expressed by the venom duct.

Its subcellular location is the secreted. This is Conotoxin Mr105 from Conus marmoreus (Marble cone).